A 254-amino-acid polypeptide reads, in one-letter code: Alcohol dehydrogenase (254 aa).

Residue 10-33 coordinates NAD(+); the sequence is FVAGLGGIGLDTSRELVKRDLKNL. Ser138 lines the substrate pocket. The Proton acceptor role is filled by Tyr151.

Belongs to the short-chain dehydrogenases/reductases (SDR) family. As to quaternary structure, homodimer.

The enzyme catalyses a primary alcohol + NAD(+) = an aldehyde + NADH + H(+). It carries out the reaction a secondary alcohol + NAD(+) = a ketone + NADH + H(+). This chain is Alcohol dehydrogenase (Adh), found in Drosophila subobscura (Fruit fly).